Consider the following 1368-residue polypeptide: DNA-directed RNA polymerase subunit beta (1368 aa).

It belongs to the RNA polymerase beta chain family. In terms of assembly, the RNAP catalytic core consists of 2 alpha, 1 beta, 1 beta' and 1 omega subunit. When a sigma factor is associated with the core the holoenzyme is formed, which can initiate transcription.

It carries out the reaction RNA(n) + a ribonucleoside 5'-triphosphate = RNA(n+1) + diphosphate. In terms of biological role, DNA-dependent RNA polymerase catalyzes the transcription of DNA into RNA using the four ribonucleoside triphosphates as substrates. The polypeptide is DNA-directed RNA polymerase subunit beta (Burkholderia ambifaria (strain MC40-6)).